We begin with the raw amino-acid sequence, 359 residues long: 3-isopropylmalate dehydrogenase (359 aa).

76 to 89 serves as a coordination point for NAD(+); the sequence is GPKWDDPSAKTRPE. Positions 96, 106, 134, and 223 each coordinate substrate. Asp223, Asp247, and Asp251 together coordinate Mg(2+). Residue 281-293 participates in NAD(+) binding; sequence GSAPDIAGKSVAN.

Belongs to the isocitrate and isopropylmalate dehydrogenases family. LeuB type 1 subfamily. As to quaternary structure, homodimer. Requires Mg(2+) as cofactor. The cofactor is Mn(2+).

It is found in the cytoplasm. The catalysed reaction is (2R,3S)-3-isopropylmalate + NAD(+) = 4-methyl-2-oxopentanoate + CO2 + NADH. It participates in amino-acid biosynthesis; L-leucine biosynthesis; L-leucine from 3-methyl-2-oxobutanoate: step 3/4. Catalyzes the oxidation of 3-carboxy-2-hydroxy-4-methylpentanoate (3-isopropylmalate) to 3-carboxy-4-methyl-2-oxopentanoate. The product decarboxylates to 4-methyl-2 oxopentanoate. This Rhodopirellula baltica (strain DSM 10527 / NCIMB 13988 / SH1) protein is 3-isopropylmalate dehydrogenase.